Consider the following 336-residue polypeptide: Immune-associated nucleotide-binding protein 13 (336 aa).

One can recognise an AIG1-type G domain in the interval 15 to 221; it reads KPERTLVLLG…YMADLSHELR (207 aa). A G1 region spans residues 24 to 31; that stretch reads GRTGNGKS. GTP contacts are provided by residues 24-32 and Ser45; that span reads GRTGNGKSA. A G2 region spans residues 51-55; it reads FITKE. The interval 73–76 is G3; sequence DTPG. Residues 143–146 form a G4 region; sequence TNED. The interval 179–181 is G5; that stretch reads DNS. Asn180 serves as a coordination point for GTP. Positions 265–328 form a coiled coil; sequence KEKISNQLKE…EKETASLRTE (64 aa).

Belongs to the TRAFAC class TrmE-Era-EngA-EngB-Septin-like GTPase superfamily. AIG1/Toc34/Toc159-like paraseptin GTPase family. IAN subfamily. Expressed in pollen grains.

The protein is Immune-associated nucleotide-binding protein 13 of Arabidopsis thaliana (Mouse-ear cress).